The chain runs to 437 residues: Putative galacturan 1,4-alpha-galacturonidase A (437 aa).

The first 20 residues, 1–20 (MKLSGSSALLLLGFGLLGHA), serve as a signal peptide directing secretion. N-linked (GlcNAc...) asparagine glycans are attached at residues asparagine 30, asparagine 101, asparagine 110, asparagine 161, asparagine 196, and asparagine 203. The stretch at 222-243 (SDHVTITNWVYEGGDDAVAFKP) is one PbH1 1 repeat. Aspartate 236 acts as the Proton donor in catalysis. Asparagine 244, asparagine 252, asparagine 278, asparagine 324, asparagine 352, asparagine 371, asparagine 382, and asparagine 387 each carry an N-linked (GlcNAc...) asparagine glycan. 3 PbH1 repeats span residues 245–265 (STNI…AFGS), 276–302 (VENI…YFKS), and 322–343 (VRNV…YIDT). Cysteine 396 and cysteine 402 form a disulfide bridge.

It belongs to the glycosyl hydrolase 28 family.

The protein localises to the secreted. It carries out the reaction [(1-&gt;4)-alpha-D-galacturonosyl](n) + H2O = alpha-D-galacturonate + [(1-&gt;4)-alpha-D-galacturonosyl](n-1). Specific in hydrolyzing the terminal glycosidic bond of polygalacturonic acid and oligogalacturonates. This chain is Putative galacturan 1,4-alpha-galacturonidase A (rgxA), found in Aspergillus flavus (strain ATCC 200026 / FGSC A1120 / IAM 13836 / NRRL 3357 / JCM 12722 / SRRC 167).